The sequence spans 291 residues: ATP phosphoribosyltransferase (291 aa).

This sequence belongs to the ATP phosphoribosyltransferase family. Long subfamily. It depends on Mg(2+) as a cofactor.

The protein resides in the cytoplasm. It carries out the reaction 1-(5-phospho-beta-D-ribosyl)-ATP + diphosphate = 5-phospho-alpha-D-ribose 1-diphosphate + ATP. It functions in the pathway amino-acid biosynthesis; L-histidine biosynthesis; L-histidine from 5-phospho-alpha-D-ribose 1-diphosphate: step 1/9. With respect to regulation, feedback inhibited by histidine. Its function is as follows. Catalyzes the condensation of ATP and 5-phosphoribose 1-diphosphate to form N'-(5'-phosphoribosyl)-ATP (PR-ATP). Has a crucial role in the pathway because the rate of histidine biosynthesis seems to be controlled primarily by regulation of HisG enzymatic activity. The sequence is that of ATP phosphoribosyltransferase from Geotalea uraniireducens (strain Rf4) (Geobacter uraniireducens).